Here is a 473-residue protein sequence, read N- to C-terminus: Putative BTB/POZ domain-containing protein R765 (473 aa).

In terms of domain architecture, BTB spans 2 to 72 (TNIQLVIKDD…KIYDREITAD (71 aa)).

The protein belongs to the mimivirus BTB/WD family.

This Acanthamoeba polyphaga mimivirus (APMV) protein is Putative BTB/POZ domain-containing protein R765.